The primary structure comprises 263 residues: Proteasome subunit beta type-5 (263 aa).

The propeptide at 1-59 (MALASVLERPLPVNQRGFFGLGGRADLLDLGPGSLSDGLSLAAPGWGVPEEPGIEMLHG) is removed in mature form. Residue T60 is the Nucleophile of the active site. A108 lines the bortezomib pocket.

The protein belongs to the peptidase T1B family. The 26S proteasome consists of a 20S proteasome core and two 19S regulatory subunits. The 20S proteasome core is a barrel-shaped complex made of 28 subunits that are arranged in four stacked rings. The two outer rings are each formed by seven alpha subunits, and the two inner rings are formed by seven beta subunits. The proteolytic activity is exerted by three beta-subunits PSMB5, PSMB6 and PSMB7. Directly interacts with POMP. Interacts with ABCB1 and TAP1. As to quaternary structure, (Microbial infection) Interacts with HIV-1 TAT protein.

The protein resides in the cytoplasm. The protein localises to the nucleus. The catalysed reaction is Cleavage of peptide bonds with very broad specificity.. Functionally, component of the 20S core proteasome complex involved in the proteolytic degradation of most intracellular proteins. This complex plays numerous essential roles within the cell by associating with different regulatory particles. Associated with two 19S regulatory particles, forms the 26S proteasome and thus participates in the ATP-dependent degradation of ubiquitinated proteins. The 26S proteasome plays a key role in the maintenance of protein homeostasis by removing misfolded or damaged proteins that could impair cellular functions, and by removing proteins whose functions are no longer required. Associated with the PA200 or PA28, the 20S proteasome mediates ubiquitin-independent protein degradation. This type of proteolysis is required in several pathways including spermatogenesis (20S-PA200 complex) or generation of a subset of MHC class I-presented antigenic peptides (20S-PA28 complex). Within the 20S core complex, PSMB5 displays a chymotrypsin-like activity. This Homo sapiens (Human) protein is Proteasome subunit beta type-5.